Reading from the N-terminus, the 429-residue chain is SVP1-like protein 2 (429 aa).

4 WD repeats span residues 10–48 (PVLA…LRTS), 50–96 (DFGA…QVGV), 178–218 (AHTS…RLYE), and 223–262 (IDKA…GTRP). The tract at residues 262–297 (PITSNGGTAYAAGEPSVTGNNRPSSPYSVASSSGGG) is disordered.

Belongs to the WD repeat PROPPIN family.

The protein resides in the vacuole membrane. It localises to the cytoplasmic vesicle membrane. In terms of biological role, involved in mitochondrial or peroxisomal functions and amino acid signaling pathways. The polypeptide is SVP1-like protein 2 (apg-14) (Neurospora crassa (strain ATCC 24698 / 74-OR23-1A / CBS 708.71 / DSM 1257 / FGSC 987)).